We begin with the raw amino-acid sequence, 661 residues long: UvrABC system protein B (661 aa).

The Helicase ATP-binding domain occupies 25–182 (AGLSSKKRSQ…NDLINLQYER (158 aa)). 38–45 (GITGSGKT) provides a ligand contact to ATP. Positions 91–114 (YYDYYQPEAYIARTDTFIEKDSSI) match the Beta-hairpin motif. The region spanning 430–592 (QVEDLISEIQ…IIPKTINRAI (163 aa)) is the Helicase C-terminal domain. Residues 621–656 (KTHIDKLKKEMLKAASNLEFEQAVKLRDQLKTLEAA) enclose the UVR domain.

This sequence belongs to the UvrB family. In terms of assembly, forms a heterotetramer with UvrA during the search for lesions. Interacts with UvrC in an incision complex.

The protein resides in the cytoplasm. Its function is as follows. The UvrABC repair system catalyzes the recognition and processing of DNA lesions. A damage recognition complex composed of 2 UvrA and 2 UvrB subunits scans DNA for abnormalities. Upon binding of the UvrA(2)B(2) complex to a putative damaged site, the DNA wraps around one UvrB monomer. DNA wrap is dependent on ATP binding by UvrB and probably causes local melting of the DNA helix, facilitating insertion of UvrB beta-hairpin between the DNA strands. Then UvrB probes one DNA strand for the presence of a lesion. If a lesion is found the UvrA subunits dissociate and the UvrB-DNA preincision complex is formed. This complex is subsequently bound by UvrC and the second UvrB is released. If no lesion is found, the DNA wraps around the other UvrB subunit that will check the other stand for damage. The chain is UvrABC system protein B from Rickettsia peacockii (strain Rustic).